Here is a 479-residue protein sequence, read N- to C-terminus: Long-chain acyl-protein thioester reductase (479 aa).

Belongs to the LuxC family.

The enzyme catalyses a long-chain fatty aldehyde + NADP(+) + CoA = a long-chain fatty acyl-CoA + NADPH + H(+). It participates in lipid metabolism; fatty acid reduction for biolumincescence. Its function is as follows. LuxC is the fatty acid reductase enzyme responsible for synthesis of the aldehyde substrate for the luminescent reaction catalyzed by luciferase. This chain is Long-chain acyl-protein thioester reductase (luxC), found in Aliivibrio fischeri (Vibrio fischeri).